The chain runs to 874 residues: Alanine--tRNA ligase (874 aa).

Zn(2+)-binding residues include histidine 562, histidine 566, cysteine 664, and histidine 668.

It belongs to the class-II aminoacyl-tRNA synthetase family. It depends on Zn(2+) as a cofactor.

The protein resides in the cytoplasm. It carries out the reaction tRNA(Ala) + L-alanine + ATP = L-alanyl-tRNA(Ala) + AMP + diphosphate. Functionally, catalyzes the attachment of alanine to tRNA(Ala) in a two-step reaction: alanine is first activated by ATP to form Ala-AMP and then transferred to the acceptor end of tRNA(Ala). Also edits incorrectly charged Ser-tRNA(Ala) and Gly-tRNA(Ala) via its editing domain. The polypeptide is Alanine--tRNA ligase (Neisseria meningitidis serogroup C (strain 053442)).